A 319-amino-acid polypeptide reads, in one-letter code: Free fatty acid receptor 3 (319 aa).

Residues Met1–Ser15 are Extracellular-facing. Residues Val16–Val36 form a helical membrane-spanning segment. Residues Gly37–Pro43 lie on the Cytoplasmic side of the membrane. The chain crosses the membrane as a helical span at residues Val44 to Leu64. The Extracellular portion of the chain corresponds to Pro65–Thr98. The cysteines at positions 84 and 165 are disulfide-linked. A helical membrane pass occupies residues Ser99–Tyr119. At Lys120 to Gln127 the chain is on the cytoplasmic side. The helical transmembrane segment at Ala128–Ile148 threads the bilayer. Residues Thr149 to Glu183 are Extracellular-facing. N-linked (GlcNAc...) asparagine glycosylation is found at Asn154 and Asn162. The helical transmembrane segment at Met184–Ile206 threads the bilayer. Residues Leu207–Arg218 are Cytoplasmic-facing. A helical membrane pass occupies residues Ile219 to Met239. The Extracellular segment spans residues Ser240–Arg254. Residues Ser255 to Ser275 form a helical membrane-spanning segment. Residues Ser276–Ser319 lie on the Cytoplasmic side of the membrane.

The protein belongs to the G-protein coupled receptor 1 family. As to expression, expressed in white adipose tissue and skeletal muscle (at protein level). Abundantly expressed in sympathetic ganglia such as the superior cervical ganglion. Also expressed by intestinal endocrine cells.

Its subcellular location is the cell membrane. G protein-coupled receptor that is activated by a major product of dietary fiber digestion, the short chain fatty acids (SCFAs), and that plays a role in the regulation of whole-body energy homeostasis and in intestinal immunity. In omnivorous mammals, the short chain fatty acids acetate, propionate and butyrate are produced primarily by the gut microbiome that metabolizes dietary fibers. SCFAs serve as a source of energy but also act as signaling molecules. That G protein-coupled receptor is probably coupled to the pertussis toxin-sensitive, G(i/o)-alpha family of G proteins. Its activation results in the formation of inositol 1,4,5-trisphosphate, the mobilization of intracellular calcium, the phosphorylation of the MAPK3/ERK1 and MAPK1/ERK2 kinases and the inhibition of intracellular cAMP accumulation. Activated by SCFAs and by beta-hydroxybutyrate, a ketone body produced by the liver upon starvation, it inhibits N-type calcium channels and modulates the activity of sympathetic neurons through a signaling cascade involving the beta and gamma subunits of its coupled G protein, phospholipase C and MAP kinases. Thereby, it may regulate energy expenditure through the control of the sympathetic nervous system that controls for instance heart rate. Upon activation by SCFAs accumulating in the intestine, it may also signal to the brain via neural circuits which in turn would regulate intestinal gluconeogenesis. May also control the production of hormones involved in whole-body energy homeostasis. May for instance, regulate blood pressure through renin secretion. May also regulate secretion of the PYY peptide by enteroendocrine cells and control gut motility, intestinal transit rate, and the harvesting of energy from SCFAs produced by gut microbiota. May also indirectly regulate the production of LEP/Leptin, a hormone acting on the CNS to inhibit food intake, in response to the presence of short-chain fatty acids in the intestine. Finally, may also play a role in glucose homeostasis. Besides its role in energy homeostasis, may play a role in intestinal immunity. May mediate the activation of the inflammatory and immune response by SCFAs in the gut, regulating the rapid production of chemokines and cytokines by intestinal epithelial cells. Exhibits an SCFA-independent constitutive G protein-coupled receptor activity. The chain is Free fatty acid receptor 3 (Ffar3) from Mus musculus (Mouse).